A 141-amino-acid chain; its full sequence is ATP synthase F(0) complex subunit C3, mitochondrial (141 aa).

A mitochondrion-targeting transit peptide spans 1–66 (MFACAKLACT…REFQTTAVNR (66 aa)). A helical membrane pass occupies residues 82–102 (VGVAGSGAGIGTVFGSLIIGY). The residue at position 109 (K109) is an N6,N6,N6-trimethyllysine. A helical membrane pass occupies residues 117 to 137 (ILGFALSEAMGLFCLMVAFLI).

The protein belongs to the ATPase C chain family. In terms of assembly, F-type ATPases have 2 components, CF(1) - the catalytic core - and CF(0) - the membrane proton channel. CF(1) has five subunits: alpha(3), beta(3), gamma(1), delta(1), epsilon(1). CF(0) has three main subunits: a, b and c. Interacts with TMEM70 and TMEM242. Trimethylated by ATPSCKMT at Lys-109. Methylation is required for proper incorporation of the C subunit into the ATP synthase complex and mitochondrial respiration.

Its subcellular location is the mitochondrion membrane. Its function is as follows. Mitochondrial membrane ATP synthase (F(1)F(0) ATP synthase or Complex V) produces ATP from ADP in the presence of a proton gradient across the membrane which is generated by electron transport complexes of the respiratory chain. F-type ATPases consist of two structural domains, F(1) - containing the extramembraneous catalytic core and F(0) - containing the membrane proton channel, linked together by a central stalk and a peripheral stalk. During catalysis, ATP synthesis in the catalytic domain of F(1) is coupled via a rotary mechanism of the central stalk subunits to proton translocation. Part of the complex F(0) domain. A homomeric c-ring of probably 10 subunits is part of the complex rotary element. This chain is ATP synthase F(0) complex subunit C3, mitochondrial, found in Bos taurus (Bovine).